Reading from the N-terminus, the 577-residue chain is Sensor protein ChvG (577 aa).

The Cytoplasmic segment spans residues 1–29 (MRGQRRWAHPFTLIRRLFGNAVFSSLTRR). Residues 30–50 (IVFFNLVALVVLVGGIMYLNQ) form a helical membrane-spanning segment. Topologically, residues 51-260 (FREGLIDARV…DIDKIVHAER (210 aa)) are periplasmic. A helical membrane pass occupies residues 261-281 (LAIIRVFGVAALVNVILSLLL). The Cytoplasmic portion of the chain corresponds to 282–577 (SSTIANPLRR…VLSLPAGPHP (296 aa)). Positions 283–339 (STIANPLRRLSAAAIRVRRGGAKEREEIPDFSSRQDEIGNLSVALREMTTALYDRIA) constitute an HAMP domain. The region spanning 347–575 (DVSHELKNPL…RFVLSLPAGP (229 aa)) is the Histidine kinase domain. At His-350 the chain carries Phosphohistidine.

Homodimer.

Its subcellular location is the cell inner membrane. It carries out the reaction ATP + protein L-histidine = ADP + protein N-phospho-L-histidine.. Its pathway is glycan metabolism; exopolysaccharide biosynthesis. Functionally, member of a two-component regulatory system ChvG(ExoS)/ChvI involved in regulating the production of succinoglycan. Activates ChvI by phosphorylation. This chain is Sensor protein ChvG (chvG), found in Rhizobium meliloti (strain 1021) (Ensifer meliloti).